Reading from the N-terminus, the 264-residue chain is Osteopontin (264 aa).

The signal sequence occupies residues 1–16 (MKLAFLCLCFISIAAA). 2 disordered regions span residues 21 to 141 (KSRQ…RGDS) and 166 to 264 (IEDD…EVTR). Basic and acidic residues predominate over residues 31 to 51 (SEEKYDPRSHHTHRYHQDHVD). The segment covering 52–73 (SQSQEHLQQTQNDLASLQQTHY) has biased composition (polar residues). The span at 97 to 118 (AVDDDDDDDNDSNDTDESDEVV) shows a compositional bias: acidic residues. N-linked (GlcNAc...) asparagine glycosylation is found at N106 and N109. The short motif at 132-134 (RGD) is the Cell attachment site element. Basic and acidic residues predominate over residues 186–212 (KESREQDSRELAQHQSVENDSRPRFDS). Residues N204 and N242 are each glycosylated (N-linked (GlcNAc...) asparagine). Polar residues predominate over residues 233–246 (ASRSAVDTSNQTLE). A compositionally biased stretch (basic and acidic residues) spans 252–264 (EDRHSIENNEVTR).

It belongs to the osteopontin family. Post-translationally, extensively phosphorylated on serine residues.

The protein localises to the secreted. Functionally, major non-collagenous bone protein that binds tightly to hydroxyapatite. Appears to form an integral part of the mineralized matrix. Probably important to cell-matrix interaction. In terms of biological role, acts as a cytokine involved in enhancing production of interferon-gamma and interleukin-12 and reducing production of interleukin-10 and is essential in the pathway that leads to type I immunity. The polypeptide is Osteopontin (SPP1) (Gallus gallus (Chicken)).